Reading from the N-terminus, the 139-residue chain is D-ribose pyranase (139 aa).

The active-site Proton donor is the His20. Residues Asp28, His106, and 128 to 130 each bind substrate; that span reads YAN.

It belongs to the RbsD / FucU family. RbsD subfamily. As to quaternary structure, homodecamer.

Its subcellular location is the cytoplasm. It catalyses the reaction beta-D-ribopyranose = beta-D-ribofuranose. It functions in the pathway carbohydrate metabolism; D-ribose degradation; D-ribose 5-phosphate from beta-D-ribopyranose: step 1/2. Its function is as follows. Catalyzes the interconversion of beta-pyran and beta-furan forms of D-ribose. In Salmonella choleraesuis (strain SC-B67), this protein is D-ribose pyranase.